Consider the following 210-residue polypeptide: LexA repressor (210 aa).

A DNA-binding region (H-T-H motif) is located at residues 30-50 (RVEIAREIGFKSPNAAEEHLK). Catalysis depends on for autocatalytic cleavage activity residues Ser127 and Lys164.

Belongs to the peptidase S24 family. In terms of assembly, homodimer.

It carries out the reaction Hydrolysis of Ala-|-Gly bond in repressor LexA.. In terms of biological role, represses a number of genes involved in the response to DNA damage (SOS response), including recA and lexA. In the presence of single-stranded DNA, RecA interacts with LexA causing an autocatalytic cleavage which disrupts the DNA-binding part of LexA, leading to derepression of the SOS regulon and eventually DNA repair. The polypeptide is LexA repressor (Actinobacillus pleuropneumoniae serotype 7 (strain AP76)).